Here is a 254-residue protein sequence, read N- to C-terminus: Zinc finger FYVE domain-containing protein 21 (254 aa).

The segment at 44–104 adopts an FYVE-type zinc-finger fold; it reads DKECPRCMQC…QCAGCAPVSR (61 aa). Positions 50, 53, 66, 69, 74, 77, 96, and 99 each coordinate Zn(2+). A PH-like region spans residues 107 to 254; that stretch reads ADFYDRQLKL…AKLLYESRDQ (148 aa).

In terms of assembly, interacts with PTK2/FAK1.

The protein resides in the cell junction. The protein localises to the focal adhesion. Its subcellular location is the cytoplasmic vesicle. It localises to the endosome. Functionally, plays a role in cell adhesion, and thereby in cell motility which requires repeated formation and disassembly of focal adhesions. Regulates microtubule-induced PTK2/FAK1 dephosphorylation, an event important for focal adhesion disassembly, as well as integrin beta-1/ITGB1 cell surface expression. The sequence is that of Zinc finger FYVE domain-containing protein 21 (ZFYVE21) from Bos taurus (Bovine).